The chain runs to 302 residues: Lipoyl synthase (302 aa).

Residues Cys-54, Cys-59, Cys-65, Cys-80, Cys-84, Cys-87, and Ser-291 each contribute to the [4Fe-4S] cluster site. The 215-residue stretch at Trp-66–Lys-280 folds into the Radical SAM core domain.

It belongs to the radical SAM superfamily. Lipoyl synthase family. [4Fe-4S] cluster serves as cofactor.

Its subcellular location is the cytoplasm. It carries out the reaction [[Fe-S] cluster scaffold protein carrying a second [4Fe-4S](2+) cluster] + N(6)-octanoyl-L-lysyl-[protein] + 2 oxidized [2Fe-2S]-[ferredoxin] + 2 S-adenosyl-L-methionine + 4 H(+) = [[Fe-S] cluster scaffold protein] + N(6)-[(R)-dihydrolipoyl]-L-lysyl-[protein] + 4 Fe(3+) + 2 hydrogen sulfide + 2 5'-deoxyadenosine + 2 L-methionine + 2 reduced [2Fe-2S]-[ferredoxin]. It participates in protein modification; protein lipoylation via endogenous pathway; protein N(6)-(lipoyl)lysine from octanoyl-[acyl-carrier-protein]: step 2/2. Its function is as follows. Catalyzes the radical-mediated insertion of two sulfur atoms into the C-6 and C-8 positions of the octanoyl moiety bound to the lipoyl domains of lipoate-dependent enzymes, thereby converting the octanoylated domains into lipoylated derivatives. The sequence is that of Lipoyl synthase from Leptospira borgpetersenii serovar Hardjo-bovis (strain JB197).